The following is a 523-amino-acid chain: Bifunctional purine biosynthesis protein PurH (523 aa).

The MGS-like domain occupies 4–152 (DHIRRPIRRA…KNHPSVAVVT (149 aa)).

This sequence belongs to the PurH family.

The catalysed reaction is (6R)-10-formyltetrahydrofolate + 5-amino-1-(5-phospho-beta-D-ribosyl)imidazole-4-carboxamide = 5-formamido-1-(5-phospho-D-ribosyl)imidazole-4-carboxamide + (6S)-5,6,7,8-tetrahydrofolate. The enzyme catalyses IMP + H2O = 5-formamido-1-(5-phospho-D-ribosyl)imidazole-4-carboxamide. The protein operates within purine metabolism; IMP biosynthesis via de novo pathway; 5-formamido-1-(5-phospho-D-ribosyl)imidazole-4-carboxamide from 5-amino-1-(5-phospho-D-ribosyl)imidazole-4-carboxamide (10-formyl THF route): step 1/1. It participates in purine metabolism; IMP biosynthesis via de novo pathway; IMP from 5-formamido-1-(5-phospho-D-ribosyl)imidazole-4-carboxamide: step 1/1. In Mycobacterium marinum (strain ATCC BAA-535 / M), this protein is Bifunctional purine biosynthesis protein PurH.